Reading from the N-terminus, the 381-residue chain is MARRPVFQEVTETTPPGTTPSGGMIDAGHKGARGAIRLWLVVLFVMVAAMIALGGATRLTGSGLSITEWKPVTGAIPPMDAATWQAEFDKYRQIPQFELVNSDMDLASFKRIYWWEWSHRLLGRLVGLVWAAGFVFFLATRRIPTGWTPRLLLLGALGGAQGAIGWWMVHSGLSGEMVRVASYRLATHLGLAFAILGLIAWYVLALSRSEAALLRARRAGEAKLFSMTTGLMHLAFVQILLGALVAGIDAGRMYTGWPTMGGEWIPAEIWDATLGWRNFFENPALVQFIHRMTGYLLAVFAVVVFLRARRSPHPVTRGAYVAMLVALAVQVALGIMNVLHASPLPLALAHQIGAVALFTLILRARHHARYPYETSVRGTVR.

Residues 1–23 are disordered; that stretch reads MARRPVFQEVTETTPPGTTPSGG. A compositionally biased stretch (low complexity) spans 11–23; sequence TETTPPGTTPSGG. A run of 8 helical transmembrane segments spans residues 34–54, 120–140, 151–171, 185–205, 228–248, 285–305, 319–339, and 342–362; these read GAIRLWLVVLFVMVAAMIALG, RLLGRLVGLVWAAGFVFFLAT, LLLLGALGGAQGAIGWWMVHS, LATHLGLAFAILGLIAWYVLA, TTGLMHLAFVQILLGALVAGI, LVQFIHRMTGYLLAVFAVVVF, AYVAMLVALAVQVALGIMNVL, and SPLPLALAHQIGAVALFTLIL. Residue H290 coordinates heme. Residue H350 coordinates heme.

This sequence belongs to the COX15/CtaA family. Type 2 subfamily. Interacts with CtaB. Requires heme b as cofactor.

Its subcellular location is the cell membrane. The enzyme catalyses Fe(II)-heme o + 2 A + H2O = Fe(II)-heme a + 2 AH2. It participates in porphyrin-containing compound metabolism; heme A biosynthesis; heme A from heme O: step 1/1. Catalyzes the conversion of heme O to heme A by two successive hydroxylations of the methyl group at C8. The first hydroxylation forms heme I, the second hydroxylation results in an unstable dihydroxymethyl group, which spontaneously dehydrates, resulting in the formyl group of heme A. The polypeptide is Heme A synthase (Paracoccus denitrificans (strain Pd 1222)).